A 736-amino-acid chain; its full sequence is Polyribonucleotide nucleotidyltransferase (736 aa).

Asp-493 and Asp-499 together coordinate Mg(2+). The KH domain occupies 560–619 (PQHAELVVNPDAIRMIIGPGGKNIKQITTVTGAAIDINDSGKISIFAPTSEAMEQAKQMI). Residues 629–703 (GKNYKGKVRK…SRKAVLLEEE (75 aa)) form the S1 motif domain. Residues 710–736 (EESSRFSKGNRNGDRSRHNNRERTRRT) form a disordered region. Residues 720-736 (RNGDRSRHNNRERTRRT) are compositionally biased toward basic and acidic residues.

This sequence belongs to the polyribonucleotide nucleotidyltransferase family. Mg(2+) serves as cofactor.

The protein resides in the cytoplasm. The enzyme catalyses RNA(n+1) + phosphate = RNA(n) + a ribonucleoside 5'-diphosphate. In terms of biological role, involved in mRNA degradation. Catalyzes the phosphorolysis of single-stranded polyribonucleotides processively in the 3'- to 5'-direction. The polypeptide is Polyribonucleotide nucleotidyltransferase (Lawsonia intracellularis (strain PHE/MN1-00)).